A 273-amino-acid chain; its full sequence is MPLSTSLLGKKSTYKDSYDVTLLFKIPRINNRNELGINSNNLPFYGVDVWNTYELSCLNKNGKPWVGVGTFYIPTDSENIVESKSFKLYLNSFNNFVVESVKELERIILQDLSNVTHAKVTGRIFPINTKVEFGVPSGKNIDDLDIVCNNYGAPDNSLIEYEDVLVEEEINSNLLKSNCLVTGQPDWGTIVIKYKGKKLKHDSFLKYLISFRNCNEFAEQCAERIFTDIKNAISPDFLSISIVYTRRGGIDICPYRSTDKSYTLPSDKRFIRQ.

81 to 83 (VES) provides a ligand contact to substrate. NADPH is bound at residue 83-84 (SK). The Thioimide intermediate role is filled by cysteine 179. Aspartate 186 (proton donor) is an active-site residue. 218–219 (AE) lines the substrate pocket. NADPH is bound at residue 247-248 (RG).

It belongs to the GTP cyclohydrolase I family. QueF type 2 subfamily. In terms of assembly, homodimer.

The protein resides in the cytoplasm. The catalysed reaction is 7-aminomethyl-7-carbaguanine + 2 NADP(+) = 7-cyano-7-deazaguanine + 2 NADPH + 3 H(+). Its pathway is tRNA modification; tRNA-queuosine biosynthesis. Catalyzes the NADPH-dependent reduction of 7-cyano-7-deazaguanine (preQ0) to 7-aminomethyl-7-deazaguanine (preQ1). The sequence is that of NADPH-dependent 7-cyano-7-deazaguanine reductase from Rickettsia massiliae (strain Mtu5).